The sequence spans 248 residues: uncharacterized protein (248 aa).

Residues 7 to 246 (VQLSNLSWTF…PASTILLPTS (240 aa)) enclose the ABC transporter domain. 43–50 (GQSGSGKS) is a binding site for ATP.

Belongs to the ABC transporter superfamily.

This is an uncharacterized protein from Mycobacterium tuberculosis (strain CDC 1551 / Oshkosh).